Consider the following 249-residue polypeptide: Triosephosphate isomerase (249 aa).

Residues N12 and K14 each contribute to the substrate site. K14 is modified (N6-acetyllysine). N16 is modified (deamidated asparagine). Y68 carries the post-translational modification 3'-nitrotyrosine. N72 bears the Deamidated asparagine mark. The residue at position 80 (S80) is a Phosphoserine. Catalysis depends on H96, which acts as the Electrophile. A Phosphoserine modification is found at S106. K142 is covalently cross-linked (Glycyl lysine isopeptide (Lys-Gly) (interchain with G-Cter in SUMO1)). An N6-succinyllysine modification is found at K149. The residue at position 156 (K156) is an N6-acetyllysine; alternate. K156 carries the post-translational modification N6-succinyllysine; alternate. S159 carries the post-translational modification Phosphoserine. The active-site Proton acceptor is E166. T173 carries the post-translational modification Phosphothreonine. K194 is modified (N6-acetyllysine; alternate). K194 bears the N6-succinyllysine; alternate mark. K194 bears the N6-methyllysine; alternate mark. A Phosphoserine modification is found at S198. The residue at position 209 (Y209) is a 3'-nitrotyrosine. S212 bears the Phosphoserine mark. Residue T214 is modified to Phosphothreonine. S223 bears the Phosphoserine mark. Position 238 is an N6-acetyllysine (K238).

It belongs to the triosephosphate isomerase family. Homodimer. Post-translationally, asn-16 and Asn-72 undergo deamidation which gives rise to four extra negative charges. These are expected to decrease subunit-subunit interactions and so expose the hydrophobic interface to the aqueous environment.

The protein localises to the cytoplasm. The catalysed reaction is D-glyceraldehyde 3-phosphate = dihydroxyacetone phosphate. It carries out the reaction dihydroxyacetone phosphate = methylglyoxal + phosphate. Its pathway is carbohydrate degradation; glycolysis; D-glyceraldehyde 3-phosphate from glycerone phosphate: step 1/1. The protein operates within carbohydrate biosynthesis; gluconeogenesis. In terms of biological role, triosephosphate isomerase is an extremely efficient metabolic enzyme that catalyzes the interconversion between dihydroxyacetone phosphate (DHAP) and D-glyceraldehyde-3-phosphate (G3P) in glycolysis and gluconeogenesis. Its function is as follows. It is also responsible for the non-negligible production of methylglyoxal a reactive cytotoxic side-product that modifies and can alter proteins, DNA and lipids. In Oryctolagus cuniculus (Rabbit), this protein is Triosephosphate isomerase (TPI1).